The sequence spans 532 residues: Nitrogenase molybdenum-iron protein alpha chain (532 aa).

[8Fe-7S] cluster-binding residues include Cys62, Cys88, and Cys153. Residues Cys271 and His489 each contribute to the [7Fe-Mo-9S-C-homocitryl] cluster site.

This sequence belongs to the NifD/NifK/NifE/NifN family. Tetramer of two alpha and two beta chains. Forms complex with the iron protein (nitrogenase component 2). It depends on [8Fe-7S] cluster as a cofactor. [7Fe-Mo-9S-C-homocitryl] cluster is required as a cofactor.

It catalyses the reaction N2 + 8 reduced [2Fe-2S]-[ferredoxin] + 16 ATP + 16 H2O = H2 + 8 oxidized [2Fe-2S]-[ferredoxin] + 2 NH4(+) + 16 ADP + 16 phosphate + 6 H(+). Its function is as follows. This molybdenum-iron protein is part of the nitrogenase complex that catalyzes the key enzymatic reactions in nitrogen fixation. This chain is Nitrogenase molybdenum-iron protein alpha chain (nifD2), found in Methanosarcina barkeri.